A 397-amino-acid polypeptide reads, in one-letter code: Elongation factor Tu (397 aa).

One can recognise a tr-type G domain in the interval 10 to 206 (KPHCNIGTIG…AVDEYIPQPE (197 aa)). A G1 region spans residues 19–26 (GHIDHGKT). GTP is bound at residue 19–26 (GHIDHGKT). Residue Thr-26 coordinates Mg(2+). Positions 62–66 (GITIS) are G2. Positions 83–86 (DCPG) are G3. GTP is bound by residues 83 to 87 (DCPGH) and 138 to 141 (NKCD). The segment at 138–141 (NKCD) is G4. Residues 176 to 178 (SAF) form a G5 region.

This sequence belongs to the TRAFAC class translation factor GTPase superfamily. Classic translation factor GTPase family. EF-Tu/EF-1A subfamily. Monomer.

The protein resides in the cytoplasm. The catalysed reaction is GTP + H2O = GDP + phosphate + H(+). GTP hydrolase that promotes the GTP-dependent binding of aminoacyl-tRNA to the A-site of ribosomes during protein biosynthesis. In Cutibacterium acnes (strain DSM 16379 / KPA171202) (Propionibacterium acnes), this protein is Elongation factor Tu.